The sequence spans 181 residues: Oligoribonuclease (181 aa).

Residues 8-171 enclose the Exonuclease domain; it reads LIWIDLEMTG…DDIRESIAEL (164 aa). The active site involves Y129.

It belongs to the oligoribonuclease family.

It localises to the cytoplasm. Its function is as follows. 3'-to-5' exoribonuclease specific for small oligoribonucleotides. The protein is Oligoribonuclease of Alcanivorax borkumensis (strain ATCC 700651 / DSM 11573 / NCIMB 13689 / SK2).